A 397-amino-acid polypeptide reads, in one-letter code: Myb family transcription factor PHL4 (397 aa).

A disordered region spans residues 1–27 (MIPNDDDDANSMKNYPLNDDDANSMKN). An HTH myb-type domain is found at 228–288 (AAAKGRMRWT…HLQKYRTAKY (61 aa)). Positions 259–284 (PKGVLKHMKVEGLTIFHVKSHLQKYR) form a DNA-binding region, H-T-H motif. Residues 319–339 (TETLRIQMEHQKKLHEQLESL) are coiled coil. The LHEQLE signature appears at 332–337 (LHEQLE). The tract at residues 359-397 (KQNMGFGGPEQGEKTSAKTPENGSEESESPRPKRPRNEE) is disordered. Positions 386-397 (ESPRPKRPRNEE) are enriched in basic and acidic residues. A Phosphoserine modification is found at Ser-387.

It belongs to the MYB-CC family.

The protein localises to the nucleus. In terms of biological role, transcription factor involved in male gametophyte development. This Arabidopsis thaliana (Mouse-ear cress) protein is Myb family transcription factor PHL4.